We begin with the raw amino-acid sequence, 725 residues long: Peroxisomal fatty acid beta-oxidation multifunctional protein MFP2 (725 aa).

The active-site Nucleophile is the glutamate 119. Glutamate 139 functions as the Proton acceptor in the catalytic mechanism. Residues 723–725 (SRL) carry the Microbody targeting signal motif.

This sequence in the N-terminal section; belongs to the enoyl-CoA hydratase/isomerase family. It in the central section; belongs to the 3-hydroxyacyl-CoA dehydrogenase family. As to expression, highly expressed in senescing leaves and at lower levels in flowers and siliques.

Its subcellular location is the glyoxysome. It is found in the peroxisome. The enzyme catalyses a (3S)-3-hydroxyacyl-CoA = a (2E)-enoyl-CoA + H2O. It carries out the reaction a 4-saturated-(3S)-3-hydroxyacyl-CoA = a (3E)-enoyl-CoA + H2O. The catalysed reaction is (3S)-3-hydroxybutanoyl-CoA = (2E)-butenoyl-CoA + H2O. It catalyses the reaction (3S)-hydroxyoctanoyl-CoA = (2E)-octenoyl-CoA + H2O. The enzyme catalyses (3S)-3-hydroxydodecanoyl-CoA = (2E)-dodecenoyl-CoA + H2O. It carries out the reaction (3S)-hydroxytetradecanoyl-CoA = (2E)-tetradecenoyl-CoA + H2O. The catalysed reaction is (3S)-hydroxyhexanoyl-CoA = (2E)-hexenoyl-CoA + H2O. It catalyses the reaction a (3Z)-enoyl-CoA = a 4-saturated (2E)-enoyl-CoA. The enzyme catalyses a (3E)-enoyl-CoA = a 4-saturated (2E)-enoyl-CoA. It carries out the reaction (3S)-3-hydroxybutanoyl-CoA = (3R)-3-hydroxybutanoyl-CoA. The catalysed reaction is a (3S)-3-hydroxyacyl-CoA + NAD(+) = a 3-oxoacyl-CoA + NADH + H(+). It catalyses the reaction (3S)-3-hydroxybutanoyl-CoA + NAD(+) = acetoacetyl-CoA + NADH + H(+). The enzyme catalyses (3S)-hydroxyhexanoyl-CoA + NAD(+) = 3-oxohexanoyl-CoA + NADH + H(+). It carries out the reaction (3S)-hydroxyoctanoyl-CoA + NAD(+) = 3-oxooctanoyl-CoA + NADH + H(+). The catalysed reaction is (3S)-3-hydroxydodecanoyl-CoA + NAD(+) = 3-oxododecanoyl-CoA + NADH + H(+). It catalyses the reaction (3S)-hydroxytetradecanoyl-CoA + NAD(+) = 3-oxotetradecanoyl-CoA + NADH + H(+). It functions in the pathway lipid metabolism; fatty acid beta-oxidation. Involved in peroxisomal fatty acid beta-oxidation during seed germination. Possesses enoyl-CoA hydratase activity against long chain substrates (C14-C18) and 3-hydroxyacyl-CoA dehydrogenase activity against chains of variable sizes (C6-C18). Possesses 3-hydroxy-3-phenylpropionyl-CoA dehydrogenase activity and is involved in the peroxisomal beta-oxidation pathway for the biosynthesis of benzoic acid (BA). Required for the accumulation in seeds of substituted hydroxybenzoylated choline esters, which are BA-containing secondary metabolites. Fatty acid beta-oxidation pathway in peroxisomes regulates gene silencing, histone acetylation and DNA methylation. This chain is Peroxisomal fatty acid beta-oxidation multifunctional protein MFP2, found in Arabidopsis thaliana (Mouse-ear cress).